The primary structure comprises 189 residues: 3-isopropylmalate dehydratase small subunit (189 aa).

The protein belongs to the LeuD family. LeuD type 1 subfamily. Heterodimer of LeuC and LeuD.

The catalysed reaction is (2R,3S)-3-isopropylmalate = (2S)-2-isopropylmalate. It functions in the pathway amino-acid biosynthesis; L-leucine biosynthesis; L-leucine from 3-methyl-2-oxobutanoate: step 2/4. Functionally, catalyzes the isomerization between 2-isopropylmalate and 3-isopropylmalate, via the formation of 2-isopropylmaleate. The polypeptide is 3-isopropylmalate dehydratase small subunit (Staphylococcus epidermidis (strain ATCC 35984 / DSM 28319 / BCRC 17069 / CCUG 31568 / BM 3577 / RP62A)).